The chain runs to 36 residues: uncharacterized protein (36 aa).

This is an uncharacterized protein from Saccharomyces cerevisiae (strain ATCC 204508 / S288c) (Baker's yeast).